Reading from the N-terminus, the 801-residue chain is Mediator of RNA polymerase II transcription subunit 25 (801 aa).

Composition is skewed to low complexity over residues 647-676 (PQQLASQAPPQATQSSVQAPGQPQNPQPGA), 687-710 (PQLRNLLLSQQPPQSSVPQTQQPL), and 722-735 (PHQAMGQQMQHQAP). The segment at 647 to 735 (PQQLASQAPP…MGQQMQHQAP (89 aa)) is disordered. Positions 689-693 (LRNLL) match the LXXLL motif motif.

This sequence belongs to the Mediator complex subunit 25 family. As to quaternary structure, component of the Mediator complex.

It is found in the nucleus. In terms of biological role, component of the Mediator complex, a coactivator involved in the regulated transcription of nearly all RNA polymerase II-dependent genes. Mediator functions as a bridge to convey information from gene-specific regulatory proteins to the basal RNA polymerase II transcription machinery. Mediator is recruited to promoters by direct interactions with regulatory proteins and serves as a scaffold for the assembly of a functional preinitiation complex with RNA polymerase II and the general transcription factors. This chain is Mediator of RNA polymerase II transcription subunit 25 (med25), found in Xenopus laevis (African clawed frog).